Reading from the N-terminus, the 156-residue chain is MILTSFMLMMIATTFTLYLASTPIVLGVNILMMALLLASTFASFMSSWFAFLIFLIYIGGMLVMFAYFLALTPNQQISNFNIMPYALITLLTFSALTYTTNIKIPTFSDISQGNSILYMSSTAPFLILLALILLLTMVIVVKLTSRSSGPLRPFSP.

The next 5 helical transmembrane spans lie at 1–21, 24–44, 49–69, 77–97, and 121–141; these read MILTSFMLMMIATTFTLYLAS, IVLGVNILMMALLLASTFASF, FAFLIFLIYIGGMLVMFAYFL, ISNFNIMPYALITLLTFSALT, and STAPFLILLALILLLTMVIVV.

Belongs to the complex I subunit 6 family.

It is found in the mitochondrion membrane. It carries out the reaction a ubiquinone + NADH + 5 H(+)(in) = a ubiquinol + NAD(+) + 4 H(+)(out). Core subunit of the mitochondrial membrane respiratory chain NADH dehydrogenase (Complex I) that is believed to belong to the minimal assembly required for catalysis. Complex I functions in the transfer of electrons from NADH to the respiratory chain. The immediate electron acceptor for the enzyme is believed to be ubiquinone. This chain is NADH-ubiquinone oxidoreductase chain 6 (ND6), found in Lumbricus terrestris (Common earthworm).